We begin with the raw amino-acid sequence, 439 residues long: N5-carboxyaminoimidazole ribonucleotide synthase (439 aa).

ATP is bound by residues lysine 113, lysine 160, 197-200, glutamate 205, and 283-284; these read EERV and NE. Positions 117-313 constitute an ATP-grasp domain; it reads RRRLAALGAA…QFEQHLRAVL (197 aa).

The protein belongs to the PurK/PurT family. In terms of assembly, homodimer.

The enzyme catalyses 5-amino-1-(5-phospho-beta-D-ribosyl)imidazole + hydrogencarbonate + ATP = 5-carboxyamino-1-(5-phospho-D-ribosyl)imidazole + ADP + phosphate + 2 H(+). It participates in purine metabolism; IMP biosynthesis via de novo pathway; 5-amino-1-(5-phospho-D-ribosyl)imidazole-4-carboxylate from 5-amino-1-(5-phospho-D-ribosyl)imidazole (N5-CAIR route): step 1/2. Catalyzes the ATP-dependent conversion of 5-aminoimidazole ribonucleotide (AIR) and HCO(3)(-) to N5-carboxyaminoimidazole ribonucleotide (N5-CAIR). The sequence is that of N5-carboxyaminoimidazole ribonucleotide synthase from Mycobacterium leprae (strain TN).